A 142-amino-acid polypeptide reads, in one-letter code: Large ribosomal subunit protein uL11 (142 aa).

The protein belongs to the universal ribosomal protein uL11 family. In terms of assembly, part of the ribosomal stalk of the 50S ribosomal subunit. Interacts with L10 and the large rRNA to form the base of the stalk. L10 forms an elongated spine to which L12 dimers bind in a sequential fashion forming a multimeric L10(L12)X complex. In terms of processing, one or more lysine residues are methylated.

In terms of biological role, forms part of the ribosomal stalk which helps the ribosome interact with GTP-bound translation factors. The protein is Large ribosomal subunit protein uL11 of Leptospira interrogans serogroup Icterohaemorrhagiae serovar copenhageni (strain Fiocruz L1-130).